The following is a 220-amino-acid chain: UPF0319 protein YccT (220 aa).

An N-terminal signal peptide occupies residues 1-20 (MKTGALTTFLALCLPVTVFA).

Belongs to the UPF0319 family.

The chain is UPF0319 protein YccT from Salmonella dublin (strain CT_02021853).